Reading from the N-terminus, the 265-residue chain is Undecaprenyl-diphosphatase (265 aa).

The next 8 helical transmembrane spans lie at 1–21 (MDIF…FLPI), 39–59 (QGVG…VLYF), 84–104 (ALAW…LALL), 114–134 (ASVI…ADWL), 144–164 (LNWK…VPGT), 187–207 (FSFL…LLEV), 218–238 (GFLI…HFFL), and 244–264 (VGMW…YAVL).

This sequence belongs to the UppP family.

The protein localises to the cell inner membrane. It catalyses the reaction di-trans,octa-cis-undecaprenyl diphosphate + H2O = di-trans,octa-cis-undecaprenyl phosphate + phosphate + H(+). Functionally, catalyzes the dephosphorylation of undecaprenyl diphosphate (UPP). Confers resistance to bacitracin. In Marinobacter nauticus (strain ATCC 700491 / DSM 11845 / VT8) (Marinobacter aquaeolei), this protein is Undecaprenyl-diphosphatase.